Consider the following 527-residue polypeptide: Glucose-6-phosphate isomerase (527 aa).

Glu-347 serves as the catalytic Proton donor. Catalysis depends on residues His-378 and Lys-493.

This sequence belongs to the GPI family.

Its subcellular location is the cytoplasm. The catalysed reaction is alpha-D-glucose 6-phosphate = beta-D-fructose 6-phosphate. It functions in the pathway carbohydrate biosynthesis; gluconeogenesis. Its pathway is carbohydrate degradation; glycolysis; D-glyceraldehyde 3-phosphate and glycerone phosphate from D-glucose: step 2/4. Catalyzes the reversible isomerization of glucose-6-phosphate to fructose-6-phosphate. In Chlamydia caviae (strain ATCC VR-813 / DSM 19441 / 03DC25 / GPIC) (Chlamydophila caviae), this protein is Glucose-6-phosphate isomerase.